The sequence spans 281 residues: uncharacterized protein (281 aa).

This is an uncharacterized protein from Acanthamoeba polyphaga (Amoeba).